The sequence spans 504 residues: Maturase K (504 aa).

This sequence belongs to the intron maturase 2 family. MatK subfamily.

It localises to the plastid. Its subcellular location is the chloroplast. Usually encoded in the trnK tRNA gene intron. Probably assists in splicing its own and other chloroplast group II introns. The protein is Maturase K of Nepenthes alata (Winged pitcher plant).